We begin with the raw amino-acid sequence, 180 residues long: MTVIASELSAAIRSIPDYPKPGIIFRDITTLLGNPRAFRRAVDELVQPYAGTKIDKIAGMEARGFILGGAVAHQLSAGFVPIRKKGKLPHTTVRVAYSLEYGVDEMEMHVDAVQPGEKVILVDDLIATGGTAEGAVKLLRQMGAEIVSACFVIDLPDLGGRKKLEDLGVDVRTLVEFSGH.

The protein belongs to the purine/pyrimidine phosphoribosyltransferase family. As to quaternary structure, homodimer.

It localises to the cytoplasm. The enzyme catalyses AMP + diphosphate = 5-phospho-alpha-D-ribose 1-diphosphate + adenine. It participates in purine metabolism; AMP biosynthesis via salvage pathway; AMP from adenine: step 1/1. Catalyzes a salvage reaction resulting in the formation of AMP, that is energically less costly than de novo synthesis. The protein is Adenine phosphoribosyltransferase of Agrobacterium fabrum (strain C58 / ATCC 33970) (Agrobacterium tumefaciens (strain C58)).